Reading from the N-terminus, the 568-residue chain is Protein AF-9 (568 aa).

One can recognise a YEATS domain in the interval 1–138; that stretch reads MASSCAVQVK…EDFRRKLLKA (138 aa). Histone H3K9cr binding stretches follow at residues 78–80 and 106–108; these read YAG and LHL. A disordered region spans residues 138-475; the sequence is AGGDPNRSIH…PPPPLLKTNN (338 aa). Residues 149–190 are compositionally biased toward low complexity; the sequence is SSSSSSSSSSSSSSSSSSSSSSSSSSSSSSSSSSSSSSSSSS. Positions 202-265 are enriched in basic and acidic residues; it reads EHKEKPSKDS…PKPMSKEPKP (64 aa). Phosphoserine occurs at positions 288 and 294. Residues 295–300 carry the Nuclear localization signal motif; that stretch reads AKKRKK. Residues 303-313 are compositionally biased toward low complexity; sequence SEALFKSFSSA. Basic and acidic residues predominate over residues 322–349; that stretch reads ADKKQIKDKSHVKMGKVKIESETSEKKK. Lys-339 is covalently cross-linked (Glycyl lysine isopeptide (Lys-Gly) (interchain with G-Cter in SUMO2)). Acidic residues predominate over residues 357 to 368; the sequence is DIVDPNDSDVEE. The span at 371 to 395 shows a compositional bias: low complexity; sequence SSKSDSEQPSPASSSSSSSSSFTPS. Ser-412 and Ser-419 each carry phosphoserine. The segment covering 414–429 has biased composition (acidic residues); the sequence is DNEEESDEVEDNDNDS. Low complexity predominate over residues 445–461; it reads VSLSDGSDSESSSASSP. Ser-483 is subject to Phosphoserine.

In terms of assembly, component of the super elongation complex (SEC), at least composed of EAF1, EAF2, CDK9, MLLT3/AF9, AFF (AFF1 or AFF4), the P-TEFb complex and ELL (ELL, ELL2 or ELL3). Interacts with BCOR. Interacts with CBX8. Interacts with ALKBH4. Enriched in undifferentiated hematopoietic stem cells in fetal liver, cord blood and bone marrow.

The protein localises to the nucleus. Its subcellular location is the chromosome. Its activity is regulated as follows. Crotonylated lysine binding is strongly inhibited by the peptide XL-07i, carrying a 2-furancarbonyl side chain and capped with a hydrophobic carboxybenzyl group. XL-07i targets the unique pi-pi-pi stacking interaction at the crotonylation recognition site. In terms of biological role, chromatin reader component of the super elongation complex (SEC), a complex required to increase the catalytic rate of RNA polymerase II transcription by suppressing transient pausing by the polymerase at multiple sites along the DNA. Specifically recognizes and binds acylated histone H3, with a preference for histone H3 that is crotonylated. Crotonylation marks active promoters and enhancers and confers resistance to transcriptional repressors. Recognizes and binds histone H3 crotonylated at 'Lys-9' (H3K9cr), and with slightly lower affinity histone H3 crotonylated at 'Lys-18' (H3K18cr). Also recognizes and binds histone H3 acetylated and butyrylated at 'Lys-9' (H3K9ac and H3K9bu, respectively), but with lower affinity than crotonylated histone H3. In the SEC complex, MLLT3 is required to recruit the complex to crotonylated histones. Recruitment of the SEC complex to crotonylated histones promotes recruitment of DOT1L on active chromatin to deposit histone H3 'Lys-79' methylation (H3K79me). Plays a key role in hematopoietic stem cell (HSC) maintenance by preserving, rather than conferring, HSC stemness. Acts by binding to the transcription start site of active genes in HSCs and sustaining level of H3K79me2, probably by recruiting DOT1L. This chain is Protein AF-9, found in Homo sapiens (Human).